The primary structure comprises 511 residues: L-arabinose isomerase (511 aa).

4 residues coordinate Mn(2+): glutamate 316, glutamate 343, histidine 360, and histidine 459.

It belongs to the arabinose isomerase family. It depends on Mn(2+) as a cofactor.

It carries out the reaction beta-L-arabinopyranose = L-ribulose. It functions in the pathway carbohydrate degradation; L-arabinose degradation via L-ribulose; D-xylulose 5-phosphate from L-arabinose (bacterial route): step 1/3. Catalyzes the conversion of L-arabinose to L-ribulose. The protein is L-arabinose isomerase of Arthrobacter sp. (strain FB24).